The following is a 320-amino-acid chain: Protein MRG1 (320 aa).

The interval Met-1–Leu-28 is disordered. Residues Asp-12–Asn-24 show a composition bias toward polar residues. Positions Ser-30 to Leu-80 constitute a Tudor-knot domain. The segment covering Ala-93–Thr-104 has biased composition (basic and acidic residues). The interval Ala-93–Asn-147 is disordered. Polar residues predominate over residues Ser-106–Arg-115. Over residues Ser-116–Lys-128 the composition is skewed to basic and acidic residues. Residues Ala-150 to Lys-318 form the MRG domain.

Interacts with HAM1 and HAM2. Interacts (via MRG domain) with CO. Component of the NuA4 histone acetyltransferase complex. Ubiquitous. Mainly expressed in the vasculature of cotyledons and leaves, and in roots and inflorescences.

The protein localises to the nucleus. In terms of biological role, chromatin remodeling factor. Acts as a 'reader' protein by binding to H3K36me3 and H3K36me3 to control histone H4 acetylation. Increases the transcriptional levels of the flowering time genes FLC and FT. Binds the chromatin at the FT promoter upon interaction with CO. This Arabidopsis thaliana (Mouse-ear cress) protein is Protein MRG1.